A 533-amino-acid chain; its full sequence is MRLDRRALYALVLLLACASLGLLYSSTRNAPSLPNPLALWSPPQGPPRLDLLDLAPEPRYAHIPVRIKEQVVGLLAQNNCSCESKGGSLPLPFLRQVRAVDLTKAFDAEELRAVSVAREQEYQAFLARSRSLADQLLIAPANSPLQYPLQGVEVQPLRSILVPGLSLQEASVQEIYQVNLSASLGTWDVAGEVTGVTLTGEGQPDLTLASPVLDKLNRQLQLVTYSSRSYQANTADTVRFSTKGHEVAFTILVRHPPNPRLYPPSSLPQGAEYNISALVTIATKTFLRYDRLRTLIASIRRFYPTVTIVIADDSDKPERISDPHVEHYFMPFGKGWFAGRNLAVSQVTTKYVLWVDDDFVFTARTRLEKLVDVLEKTPLDLVGGAVREISGYATTYRQLLSVEPGAPGLGNCFRQKQGFHHELVGFPSCVVTDGVVNFFLARTDKVRQVGFDPRLNRVAHLEFFLDGLGFLRVGSCSDVVVDHASKVKLPWTAKDPGAETYARYRYPGSLDQSQVAKHRLLFFKHRLQCMTAE.

At 1–7 (MRLDRRA) the chain is on the cytoplasmic side. A helical; Signal-anchor for type II membrane protein transmembrane segment spans residues 8–25 (LYALVLLLACASLGLLYS). The Lumenal portion of the chain corresponds to 26-533 (STRNAPSLPN…KHRLQCMTAE (508 aa)). N-linked (GlcNAc...) asparagine glycans are attached at residues asparagine 79, asparagine 179, and asparagine 274. The cysteines at positions 429 and 476 are disulfide-linked.

It belongs to the glycosyltransferase 2 family. As to quaternary structure, homodimer; disulfide-linked. As to expression, most abundant in brain, liver, lung, spleen and testis.

It localises to the golgi apparatus membrane. It catalyses the reaction a ganglioside GM3 (d18:1(4E)) + UDP-N-acetyl-alpha-D-galactosamine = a ganglioside GM2 (d18:1(4E)) + UDP + H(+). It carries out the reaction a ganglioside GD3 (d18:1(4E)) + UDP-N-acetyl-alpha-D-galactosamine = a ganglioside GD2 (d18:1(4E)) + UDP + H(+). The catalysed reaction is a ganglioside GM3 + UDP-N-acetyl-alpha-D-galactosamine = a ganglioside GM2 + UDP + H(+). The enzyme catalyses a ganglioside GD3 + UDP-N-acetyl-alpha-D-galactosamine = a ganglioside GD2 + UDP + H(+). It catalyses the reaction a ganglioside GD1a + UDP-N-acetyl-alpha-D-galactosamine = a ganglioside GalNAc-GD1a + UDP + H(+). It carries out the reaction a ganglioside GT3 (d18:1(4E)) + UDP-N-acetyl-alpha-D-galactosamine = a ganglioside GT2 (d18:1(4E)) + UDP + H(+). The catalysed reaction is a beta-D-Gal-(1-&gt;4)-beta-D-Glc-(1&lt;-&gt;1)-Cer(d18:1(4E)) + UDP-N-acetyl-alpha-D-galactosamine = a ganglioside GA2 (d18:1(4E)) + UDP + H(+). The enzyme catalyses a neolactoside IV(3)-alpha-NeuGc-nLc4Cer + UDP-N-acetyl-alpha-D-galactosamine = a neolactoside IV(4)-beta-GalNAc-IV(3)-alpha-NeuGc-nLc4Cer + UDP + H(+). It participates in sphingolipid metabolism. Its function is as follows. Involved in the biosynthesis of gangliosides GM2, GD2 and GA2. Involved in the biosynthesis of gangliosides GM2, GD2, GT2 and GA2 from GM3, GD3, GT3 and GA3, respectively. This is Beta-1,4 N-acetylgalactosaminyltransferase 1 from Mus musculus (Mouse).